A 298-amino-acid chain; its full sequence is ATP phosphoribosyltransferase (298 aa).

This sequence belongs to the ATP phosphoribosyltransferase family. Long subfamily. Mg(2+) is required as a cofactor.

It localises to the cytoplasm. It carries out the reaction 1-(5-phospho-beta-D-ribosyl)-ATP + diphosphate = 5-phospho-alpha-D-ribose 1-diphosphate + ATP. Its pathway is amino-acid biosynthesis; L-histidine biosynthesis; L-histidine from 5-phospho-alpha-D-ribose 1-diphosphate: step 1/9. With respect to regulation, feedback inhibited by histidine. Its function is as follows. Catalyzes the condensation of ATP and 5-phosphoribose 1-diphosphate to form N'-(5'-phosphoribosyl)-ATP (PR-ATP). Has a crucial role in the pathway because the rate of histidine biosynthesis seems to be controlled primarily by regulation of HisG enzymatic activity. In Aliivibrio fischeri (strain ATCC 700601 / ES114) (Vibrio fischeri), this protein is ATP phosphoribosyltransferase.